The chain runs to 257 residues: Glutamate racemase (257 aa).

Residues 12-13 and 44-45 each bind substrate; these read DS and YG. C75 functions as the Proton donor/acceptor in the catalytic mechanism. 76-77 is a binding site for substrate; it reads NT. C185 serves as the catalytic Proton donor/acceptor. 186–187 lines the substrate pocket; it reads TH.

The protein belongs to the aspartate/glutamate racemases family.

It catalyses the reaction L-glutamate = D-glutamate. It functions in the pathway cell wall biogenesis; peptidoglycan biosynthesis. Provides the (R)-glutamate required for cell wall biosynthesis. This is Glutamate racemase from Clostridium botulinum (strain Loch Maree / Type A3).